Consider the following 221-residue polypeptide: DNA mismatch repair protein MutH (221 aa).

It belongs to the MutH family.

The protein localises to the cytoplasm. Functionally, sequence-specific endonuclease that cleaves unmethylated GATC sequences. It is involved in DNA mismatch repair. The polypeptide is DNA mismatch repair protein MutH (Vibrio cholerae serotype O1 (strain ATCC 39541 / Classical Ogawa 395 / O395)).